A 124-amino-acid chain; its full sequence is Small ribosomal subunit protein uS12 (124 aa).

3-methylthioaspartic acid is present on D89.

This sequence belongs to the universal ribosomal protein uS12 family. In terms of assembly, part of the 30S ribosomal subunit. Contacts proteins S8 and S17. May interact with IF1 in the 30S initiation complex.

Functionally, with S4 and S5 plays an important role in translational accuracy. Its function is as follows. Interacts with and stabilizes bases of the 16S rRNA that are involved in tRNA selection in the A site and with the mRNA backbone. Located at the interface of the 30S and 50S subunits, it traverses the body of the 30S subunit contacting proteins on the other side and probably holding the rRNA structure together. The combined cluster of proteins S8, S12 and S17 appears to hold together the shoulder and platform of the 30S subunit. This is Small ribosomal subunit protein uS12 from Vibrio campbellii (strain ATCC BAA-1116).